The following is a 206-amino-acid chain: Proteasome subunit beta 1 (206 aa).

The propeptide at 1–5 (MLMKG) is removed in mature form; by autocatalysis. Residue threonine 6 is the Nucleophile of the active site.

This sequence belongs to the peptidase T1B family. As to quaternary structure, the 20S proteasome core is composed of 14 alpha and 14 beta subunits that assemble into four stacked heptameric rings, resulting in a barrel-shaped structure. The two inner rings, each composed of seven catalytic beta subunits, are sandwiched by two outer rings, each composed of seven alpha subunits. The catalytic chamber with the active sites is on the inside of the barrel. Has a gated structure, the ends of the cylinder being occluded by the N-termini of the alpha-subunits. Is capped at one or both ends by the proteasome regulatory ATPase, PAN.

The protein localises to the cytoplasm. It catalyses the reaction Cleavage of peptide bonds with very broad specificity.. With respect to regulation, the formation of the proteasomal ATPase PAN-20S proteasome complex, via the docking of the C-termini of PAN into the intersubunit pockets in the alpha-rings, triggers opening of the gate for substrate entry. Interconversion between the open-gate and close-gate conformations leads to a dynamic regulation of the 20S proteasome proteolysis activity. Component of the proteasome core, a large protease complex with broad specificity involved in protein degradation. The polypeptide is Proteasome subunit beta 1 (Korarchaeum cryptofilum (strain OPF8)).